A 285-amino-acid polypeptide reads, in one-letter code: Malectin (285 aa).

An N-terminal signal peptide occupies residues M1 to A26. The Lumenal segment spans residues E27 to S262. Residues Y71, Y93, Y120, F121, and D190 each coordinate a carbohydrate. The segment at K209 to A258 is disordered. The segment covering E220 to P232 has biased composition (acidic residues). N261 carries an N-linked (GlcNAc...) asparagine glycan. Residues S263–C283 traverse the membrane as a helical segment. At R284 to L285 the chain is on the cytoplasmic side.

Belongs to the malectin family.

Its subcellular location is the endoplasmic reticulum membrane. In terms of biological role, carbohydrate-binding protein with a strong ligand preference for Glc2-N-glycan. May play a role in the early steps of protein N-glycosylation. This Danio rerio (Zebrafish) protein is Malectin.